Consider the following 451-residue polypeptide: LisH domain-containing protein C1711.05 (451 aa).

Residues 6-38 (MKSKVCPLIYHFLQENGYVKTAQTFLKETGDKD) enclose the LisH domain. Residues 59–394 (PYLTTEDVGK…VGDPSQWDFA (336 aa)) form a disordered region. The segment covering 73–98 (KESLEKSNDDSQKISKKGAPPEKAHS) has biased composition (basic and acidic residues). A compositionally biased stretch (low complexity) spans 99 to 120 (SSEASGSGSSSDESDSSSSESE). The span at 135 to 145 (SESESSSEDSD) shows a compositional bias: acidic residues. The segment covering 146 to 174 (SSSSSSDSESESSSEGSDSSSSSSSSESE) has biased composition (low complexity). Positions 189–199 (SESESSSEDSD) are enriched in acidic residues. Positions 200 to 228 (SSSSSSDSESESSSEGSDSSSSSSSSESE) are enriched in low complexity. Acidic residues-rich tracts occupy residues 243–253 (SESESSSEDSD) and 278–300 (DSEDDSSSDSSDSESESSSEDSD). Residues 301 to 319 (STSSSSDSDSSSSSEDGNS) are compositionally biased toward low complexity. The span at 320–332 (NTDTTTSGEVSAQ) shows a compositional bias: polar residues. Residues 333–343 (SSTNSTSSEES) show a composition bias toward low complexity. Over residues 344–365 (TSVKDEDSSKIHDKSLKRKHED) the composition is skewed to basic and acidic residues. Over residues 369–380 (STSTKSSRTTKT) the composition is skewed to low complexity.

The protein resides in the nucleus. It is found in the nucleolus. The chain is LisH domain-containing protein C1711.05 from Schizosaccharomyces pombe (strain 972 / ATCC 24843) (Fission yeast).